The primary structure comprises 197 residues: Potassium-transporting ATPase KdpC subunit (197 aa).

The helical transmembrane segment at 7-27 (PALVSMGLFTVLLGLAYPLAV) threads the bilayer.

Belongs to the KdpC family. As to quaternary structure, the system is composed of three essential subunits: KdpA, KdpB and KdpC.

It is found in the cell inner membrane. Its function is as follows. Part of the high-affinity ATP-driven potassium transport (or Kdp) system, which catalyzes the hydrolysis of ATP coupled with the electrogenic transport of potassium into the cytoplasm. This subunit acts as a catalytic chaperone that increases the ATP-binding affinity of the ATP-hydrolyzing subunit KdpB by the formation of a transient KdpB/KdpC/ATP ternary complex. The sequence is that of Potassium-transporting ATPase KdpC subunit from Caulobacter vibrioides (strain ATCC 19089 / CIP 103742 / CB 15) (Caulobacter crescentus).